An 84-amino-acid polypeptide reads, in one-letter code: RNA-binding protein SAHV_0542 (84 aa).

Belongs to the eukaryotic ribosomal protein eL8 family.

The protein is RNA-binding protein SAHV_0542 of Staphylococcus aureus (strain Mu3 / ATCC 700698).